The primary structure comprises 30 residues: Cyclotide hyen-L (30 aa).

The cyclopeptide (Gly-Asn) cross-link spans 1 to 30 (GIPCAESCVYIPCTVTALLGCSCSDKVCYN). 3 cysteine pairs are disulfide-bonded: Cys4–Cys21, Cys8–Cys23, and Cys13–Cys28.

This is a cyclic peptide. In terms of tissue distribution, detected in stems (at protein level).

Its function is as follows. Probably participates in a plant defense mechanism. Has cytotoxic activity against HUVEC cells (LC(50)= 2.26 uM) and various cancer cells including HeLa (LC(50)= 3.48 uM), MCF-7 and K562. Displays very weak hemolytic activity. Binds to and induces leakage in phospholipd membranes, particularly ones containing 1-palmitoyl-2-oleophosphatidylethanolamine (POPE). This is Cyclotide hyen-L from Pigea enneasperma (Spade flower).